A 75-amino-acid chain; its full sequence is Large ribosomal subunit protein bL31 (75 aa).

Belongs to the bacterial ribosomal protein bL31 family. Type A subfamily. Part of the 50S ribosomal subunit.

In terms of biological role, binds the 23S rRNA. The polypeptide is Large ribosomal subunit protein bL31 (Zymomonas mobilis subsp. mobilis (strain ATCC 31821 / ZM4 / CP4)).